Consider the following 99-residue polypeptide: MSNSSSNPSKNEYFIKQRDLLIQEISNNLSIVQTNLETLNRSLHESKQIGKEFDDVARLWSTFYDGMNGMNHQTRENTRDENNKISSSDTEDENNNNKI.

A disordered region spans residues 69–99 (GMNHQTRENTRDENNKISSSDTEDENNNNKI). Basic and acidic residues predominate over residues 73-83 (QTRENTRDENN). Positions 89–99 (DTEDENNNNKI) are enriched in acidic residues.

This sequence belongs to the DASH complex DAD1 family. As to quaternary structure, component of the DASH complex consisting of ASK1, DAD1, DAD2, DAD3, DAD4, DAM1, DUO1, HSK3, SPC19 and SPC34, with a stoichiometry of one copy of each subunit per complex. Multiple DASH complexes oligomerize to form a ring that encircles spindle microtubules and organizes the rod-like NDC80 complexes of the outer kinetochore. DASH complex oligomerization strengthens microtubule attachments. On cytoplasmic microtubules, DASH complexes appear to form patches instead of rings.

It is found in the chromosome. It localises to the centromere. The protein resides in the kinetochore. The protein localises to the cytoplasm. Its subcellular location is the cytoskeleton. It is found in the spindle. It localises to the nucleus. Its function is as follows. Component of the DASH complex that connects microtubules with kinetochores and couples microtubule depolymerisation to chromosome movement; it is involved in retrieving kinetochores to the spindle poles before their re-orientation on the spindle in early mitosis and allows microtubule depolymerization to pull chromosomes apart and resist detachment during anaphase. Kinetochores, consisting of a centromere-associated inner segment and a microtubule-contacting outer segment, play a crucial role in chromosome segregation by mediating the physical connection between centromeric DNA and microtubules. Kinetochores also serve as an input point for the spindle assembly checkpoint, which delays anaphase until all chromosomes have bioriented on the mitotic spindle. This chain is DASH complex subunit DAD1, found in Candida albicans (strain SC5314 / ATCC MYA-2876) (Yeast).